The sequence spans 263 residues: Acyl-[acyl-carrier-protein]--UDP-N-acetylglucosamine O-acyltransferase (263 aa).

The protein belongs to the transferase hexapeptide repeat family. LpxA subfamily. In terms of assembly, homotrimer.

It localises to the cytoplasm. The enzyme catalyses a (3R)-hydroxyacyl-[ACP] + UDP-N-acetyl-alpha-D-glucosamine = a UDP-3-O-[(3R)-3-hydroxyacyl]-N-acetyl-alpha-D-glucosamine + holo-[ACP]. It functions in the pathway glycolipid biosynthesis; lipid IV(A) biosynthesis; lipid IV(A) from (3R)-3-hydroxytetradecanoyl-[acyl-carrier-protein] and UDP-N-acetyl-alpha-D-glucosamine: step 1/6. Functionally, involved in the biosynthesis of lipid A, a phosphorylated glycolipid that anchors the lipopolysaccharide to the outer membrane of the cell. The protein is Acyl-[acyl-carrier-protein]--UDP-N-acetylglucosamine O-acyltransferase of Campylobacter jejuni subsp. jejuni serotype O:6 (strain 81116 / NCTC 11828).